The chain runs to 493 residues: 3-octaprenyl-4-hydroxybenzoate carboxy-lyase (493 aa).

A Mn(2+)-binding site is contributed by asparagine 172. Prenylated FMN is bound by residues 175-177 (IYR), 189-191 (RWL), and 194-195 (RG). Residue glutamate 238 coordinates Mn(2+). Aspartate 287 functions as the Proton donor in the catalytic mechanism.

The protein belongs to the UbiD family. In terms of assembly, homohexamer. It depends on prenylated FMN as a cofactor. Mn(2+) serves as cofactor.

The protein localises to the cell membrane. It catalyses the reaction a 4-hydroxy-3-(all-trans-polyprenyl)benzoate + H(+) = a 2-(all-trans-polyprenyl)phenol + CO2. Its pathway is cofactor biosynthesis; ubiquinone biosynthesis. In terms of biological role, catalyzes the decarboxylation of 3-octaprenyl-4-hydroxy benzoate to 2-octaprenylphenol, an intermediate step in ubiquinone biosynthesis. This Shewanella woodyi (strain ATCC 51908 / MS32) protein is 3-octaprenyl-4-hydroxybenzoate carboxy-lyase.